The sequence spans 321 residues: Lipoyl synthase (321 aa).

Positions 68, 73, 79, 94, 98, 101, and 308 each coordinate [4Fe-4S] cluster. In terms of domain architecture, Radical SAM core spans 80–297; the sequence is FNHGTATFMI…KAEAMAMGFT (218 aa).

Belongs to the radical SAM superfamily. Lipoyl synthase family. [4Fe-4S] cluster is required as a cofactor.

The protein localises to the cytoplasm. The catalysed reaction is [[Fe-S] cluster scaffold protein carrying a second [4Fe-4S](2+) cluster] + N(6)-octanoyl-L-lysyl-[protein] + 2 oxidized [2Fe-2S]-[ferredoxin] + 2 S-adenosyl-L-methionine + 4 H(+) = [[Fe-S] cluster scaffold protein] + N(6)-[(R)-dihydrolipoyl]-L-lysyl-[protein] + 4 Fe(3+) + 2 hydrogen sulfide + 2 5'-deoxyadenosine + 2 L-methionine + 2 reduced [2Fe-2S]-[ferredoxin]. The protein operates within protein modification; protein lipoylation via endogenous pathway; protein N(6)-(lipoyl)lysine from octanoyl-[acyl-carrier-protein]: step 2/2. In terms of biological role, catalyzes the radical-mediated insertion of two sulfur atoms into the C-6 and C-8 positions of the octanoyl moiety bound to the lipoyl domains of lipoate-dependent enzymes, thereby converting the octanoylated domains into lipoylated derivatives. The protein is Lipoyl synthase of Klebsiella pneumoniae (strain 342).